A 316-amino-acid chain; its full sequence is Ribosomal RNA small subunit methyltransferase H (316 aa).

S-adenosyl-L-methionine is bound by residues 35 to 37 (SGH), D55, F84, D105, and Q112.

The protein belongs to the methyltransferase superfamily. RsmH family.

The protein localises to the cytoplasm. The catalysed reaction is cytidine(1402) in 16S rRNA + S-adenosyl-L-methionine = N(4)-methylcytidine(1402) in 16S rRNA + S-adenosyl-L-homocysteine + H(+). Its function is as follows. Specifically methylates the N4 position of cytidine in position 1402 (C1402) of 16S rRNA. The polypeptide is Ribosomal RNA small subunit methyltransferase H (Streptococcus pyogenes serotype M4 (strain MGAS10750)).